The sequence spans 552 residues: Probable inorganic phosphate transporter 1-10 (552 aa).

Topologically, residues methionine 1–alanine 22 are cytoplasmic. The chain crosses the membrane as a helical span at residues isoleucine 23–valine 43. Over methionine 44–serine 68 the chain is Extracellular. The chain crosses the membrane as a helical span at residues alanine 69–glycine 89. Over aspartate 90–arginine 96 the chain is Cytoplasmic. The chain crosses the membrane as a helical span at residues valine 97–cysteine 117. Residues arginine 118 to alanine 123 are Extracellular-facing. Residues leucine 124–leucine 144 form a helical membrane-spanning segment. Residues serine 145 to arginine 158 lie on the Cytoplasmic side of the membrane. A helical membrane pass occupies residues glycine 159 to valine 179. Over threonine 180 to alanine 203 the chain is Extracellular. Residues aspartate 204–tryptophan 224 traverse the membrane as a helical segment. The Cytoplasmic portion of the chain corresponds to arginine 225–aspartate 295. The helical transmembrane segment at leucine 296–phenylalanine 316 threads the bilayer. Residues glutamine 317–lysine 342 lie on the Extracellular side of the membrane. The helical transmembrane segment at phenylalanine 343–isoleucine 363 threads the bilayer. Residues aspartate 364–arginine 369 lie on the Cytoplasmic side of the membrane. The chain crosses the membrane as a helical span at residues cysteine 370–tyrosine 390. The Extracellular segment spans residues aspartate 391–histidine 397. Residues glycine 398–proline 418 form a helical membrane-spanning segment. The Cytoplasmic segment spans residues asparagine 419 to histidine 439. A helical membrane pass occupies residues glycine 440 to alanine 460. Topologically, residues serine 461–proline 473 are extracellular. The chain crosses the membrane as a helical span at residues glycine 474–leucine 494. Residues threonine 495–valine 552 are Cytoplasmic-facing. The tract at residues leucine 507–leucine 540 is disordered.

Belongs to the major facilitator superfamily. Phosphate:H(+) symporter (TC 2.A.1.9) family. As to expression, expressed at low levels in roots.

The protein resides in the membrane. Functionally, high-affinity transporter for external inorganic phosphate. In Oryza sativa subsp. japonica (Rice), this protein is Probable inorganic phosphate transporter 1-10 (PHT1-10).